The primary structure comprises 89 residues: Small ribosomal subunit protein uS15 (89 aa).

This sequence belongs to the universal ribosomal protein uS15 family. As to quaternary structure, part of the 30S ribosomal subunit. Forms a bridge to the 50S subunit in the 70S ribosome, contacting the 23S rRNA.

Its function is as follows. One of the primary rRNA binding proteins, it binds directly to 16S rRNA where it helps nucleate assembly of the platform of the 30S subunit by binding and bridging several RNA helices of the 16S rRNA. Functionally, forms an intersubunit bridge (bridge B4) with the 23S rRNA of the 50S subunit in the ribosome. The protein is Small ribosomal subunit protein uS15 of Staphylococcus epidermidis (strain ATCC 12228 / FDA PCI 1200).